Consider the following 697-residue polypeptide: Trishanku (697 aa).

The interval 1–94 (MEIEPVVRIS…NNNSNSNGTD (94 aa)) is disordered. Residues 12-47 (NGNNNQNNNNNNNNNTNNNSNNNNNNNNSSNINSTN) are compositionally biased toward low complexity. Polar residues predominate over residues 58–72 (KMISNINNQKSPNPL). Positions 73–91 (NSSVDDNNNTNNNNNSNSN) are enriched in low complexity. The BTB domain occupies 122 to 189 (SDVIFKVGDR…ICIGILDLDY (68 aa)). Residues 311–455 (IQQQQQQQQQ…DSANDDYEYS (145 aa)) are disordered. The segment covering 312–331 (QQQQQQQQQQLQSANGASGK) has biased composition (low complexity). Positions 332-344 (SHGKRSSSSHLKK) are enriched in basic residues. The segment covering 353 to 363 (GSCSSRCSSRR) has biased composition (low complexity). The span at 416 to 453 (DDFENDSEDGDDDDEDDDEDDDFTDDDDKDDSANDDYE) shows a compositional bias: acidic residues.

As to expression, expressed strongly in presumptive spore (prespore or psp) cells during the late G2 phase of cell cycle. Present at a low level in vegetative cells.

Required for normal morphogenesis and cell-type stability. This Dictyostelium discoideum (Social amoeba) protein is Trishanku (triA).